The sequence spans 239 residues: Uridylate kinase (239 aa).

10-13 contacts ATP; that stretch reads KLSG. Gly53 contacts UMP. Residues Gly54 and Arg58 each contribute to the ATP site. UMP is bound by residues Asp73 and 135 to 142; that span reads TGRPYFTT. Positions 163, 169, and 172 each coordinate ATP.

The protein belongs to the UMP kinase family. Homohexamer.

The protein localises to the cytoplasm. It catalyses the reaction UMP + ATP = UDP + ADP. It participates in pyrimidine metabolism; CTP biosynthesis via de novo pathway; UDP from UMP (UMPK route): step 1/1. With respect to regulation, inhibited by UTP. Its function is as follows. Catalyzes the reversible phosphorylation of UMP to UDP. The chain is Uridylate kinase from Mycoplasmopsis synoviae (strain 53) (Mycoplasma synoviae).